The chain runs to 101 residues: Phosphoribosyl-AMP cyclohydrolase (101 aa).

Asp-71 is a Mg(2+) binding site. Cys-72 contacts Zn(2+). Residues Asp-73 and Asp-75 each contribute to the Mg(2+) site. Zn(2+)-binding residues include Cys-88 and Cys-95.

It belongs to the PRA-CH family. As to quaternary structure, homodimer. Requires Mg(2+) as cofactor. Zn(2+) is required as a cofactor.

The protein localises to the cytoplasm. The enzyme catalyses 1-(5-phospho-beta-D-ribosyl)-5'-AMP + H2O = 1-(5-phospho-beta-D-ribosyl)-5-[(5-phospho-beta-D-ribosylamino)methylideneamino]imidazole-4-carboxamide. The protein operates within amino-acid biosynthesis; L-histidine biosynthesis; L-histidine from 5-phospho-alpha-D-ribose 1-diphosphate: step 3/9. Functionally, catalyzes the hydrolysis of the adenine ring of phosphoribosyl-AMP. This is Phosphoribosyl-AMP cyclohydrolase from Bacillus cereus (strain AH187).